We begin with the raw amino-acid sequence, 522 residues long: ATP synthase subunit alpha (522 aa).

176 to 183 contributes to the ATP binding site; it reads GDRQTGKT.

It belongs to the ATPase alpha/beta chains family. F-type ATPases have 2 components, CF(1) - the catalytic core - and CF(0) - the membrane proton channel. CF(1) has five subunits: alpha(3), beta(3), gamma(1), delta(1), epsilon(1). CF(0) has four main subunits: a(1), b(1), b'(1) and c(9-12).

It is found in the cell membrane. It catalyses the reaction ATP + H2O + 4 H(+)(in) = ADP + phosphate + 5 H(+)(out). Its function is as follows. Produces ATP from ADP in the presence of a proton gradient across the membrane. The alpha chain is a regulatory subunit. In Chloroflexus aurantiacus (strain ATCC 29366 / DSM 635 / J-10-fl), this protein is ATP synthase subunit alpha.